The primary structure comprises 131 residues: Neo-calmodulin (131 aa).

4 EF-hand domains span residues 1 to 32, 33 to 68, 70 to 105, and 106 to 131; these read EFKE…LGQN, PTEA…KMKD, DSEE…LGEK, and LTDE…YEEF. Residues Asp-10, Asp-12, Asp-14, Thr-16, Glu-21, Asp-46, Asp-48, Asn-50, Thr-52, Glu-57, Asp-83, Asp-85, Asn-87, Tyr-89, Glu-94, Asp-119, Asp-121, Asp-123, Gln-125, and Glu-130 each contribute to the Ca(2+) site.

This sequence belongs to the calmodulin family.

The sequence is that of Neo-calmodulin from Gallus gallus (Chicken).